The following is a 116-amino-acid chain: Putative antiporter subunit mnhC2 (116 aa).

Helical transmembrane passes span 3–23, 28–48, and 72–92; these read LILL…ILSL, IVIG…SMGH, and AIVL…LVLV.

Belongs to the CPA3 antiporters (TC 2.A.63) subunit C family. May form a heterooligomeric complex that consists of seven subunits: mnhA2, mnhB2, mnhC2, mnhD2, mnhE2, mnhF2 and mnhG2.

It localises to the cell membrane. The sequence is that of Putative antiporter subunit mnhC2 (mnhC2) from Staphylococcus haemolyticus (strain JCSC1435).